The chain runs to 357 residues: Sorbitol dehydrogenase 2 (357 aa).

Residue cysteine 43 participates in Zn(2+) binding. Substrate is bound at residue tyrosine 49. 2 residues coordinate Zn(2+): histidine 68 and glutamate 69. Glutamate 154 contributes to the substrate binding site. NAD(+) is bound by residues aspartate 202, lysine 207, 275–277 (VGM), and 299–301 (CFR). Substrate-binding residues include arginine 301 and tyrosine 302.

Belongs to the zinc-containing alcohol dehydrogenase family. In terms of assembly, homotetramer. It depends on Zn(2+) as a cofactor.

It carries out the reaction keto-D-fructose + NADH + H(+) = D-sorbitol + NAD(+). It catalyses the reaction xylitol + NAD(+) = D-xylulose + NADH + H(+). Functionally, polyol dehydrogenase that catalyzes the reversible NAD(+)-dependent oxidation of various sugar alcohols. Is active with D-sorbitol (D-glucitol) and xylitol as substrates, leading to the C2-oxidized product D-fructose and D-xylulose, respectively. This is Sorbitol dehydrogenase 2 (SOR2) from Saccharomyces cerevisiae (strain ATCC 204508 / S288c) (Baker's yeast).